The chain runs to 231 residues: Histone H1 (231 aa).

Residues 1 to 17 (MSDPAIEVAPVPVASPA) are compositionally biased toward low complexity. 2 disordered regions span residues 1–44 (MSDP…PVSD) and 124–231 (TKKV…AKKA). Residues 38 to 112 (THPPVSDMIV…GASGSFKLPA (75 aa)) enclose the H15 domain. 3 stretches are compositionally biased toward basic residues: residues 145 to 171 (KVKK…KTTK), 178 to 213 (PTKK…KAKK), and 221 to 231 (KAAKKPSAKKA).

Belongs to the histone H1/H5 family.

Its subcellular location is the nucleus. The protein localises to the chromosome. Histones H1 are necessary for the condensation of nucleosome chains into higher-order structures. The protein is Histone H1 of Chironomus thummi thummi (Midge).